Reading from the N-terminus, the 604-residue chain is Aspartate--tRNA(Asp/Asn) ligase (604 aa).

Residue Glu-169 coordinates L-aspartate. Residues 193-196 (QLFK) are aspartate. Arg-215 is an L-aspartate binding site. ATP contacts are provided by residues 215 to 217 (RDE) and Gln-224. His-456 lines the L-aspartate pocket. Glu-490 serves as a coordination point for ATP. Arg-497 contacts L-aspartate. 542 to 545 (GWDR) is a binding site for ATP. Residues 571–604 (PLTGAPAPITAQQRKEAGVDAQPEPKQAEAEPEA) are disordered.

Belongs to the class-II aminoacyl-tRNA synthetase family. Type 1 subfamily. Homodimer.

It is found in the cytoplasm. The enzyme catalyses tRNA(Asx) + L-aspartate + ATP = L-aspartyl-tRNA(Asx) + AMP + diphosphate. Aspartyl-tRNA synthetase with relaxed tRNA specificity since it is able to aspartylate not only its cognate tRNA(Asp) but also tRNA(Asn). Reaction proceeds in two steps: L-aspartate is first activated by ATP to form Asp-AMP and then transferred to the acceptor end of tRNA(Asp/Asn). The chain is Aspartate--tRNA(Asp/Asn) ligase from Micrococcus luteus (strain ATCC 4698 / DSM 20030 / JCM 1464 / CCM 169 / CCUG 5858 / IAM 1056 / NBRC 3333 / NCIMB 9278 / NCTC 2665 / VKM Ac-2230) (Micrococcus lysodeikticus).